A 259-amino-acid polypeptide reads, in one-letter code: UPF0246 protein PputGB1_4560 (259 aa).

It belongs to the UPF0246 family.

The protein is UPF0246 protein PputGB1_4560 of Pseudomonas putida (strain GB-1).